Here is a 137-residue protein sequence, read N- to C-terminus: MSSEKEVQEKIATLQILQEEAEALQRRLMELEILENEYRKTLETLEFFESIDTSVEALMNLGGGVFAYVDVKNSKKMLVDIGSGVVVEREVGEAIEFVKNRIKKIEENQEKMTSMLQQVLSQAQRIQQELAARQQKE.

It belongs to the prefoldin subunit alpha family. In terms of assembly, heterohexamer of two alpha and four beta subunits.

It localises to the cytoplasm. In terms of biological role, molecular chaperone capable of stabilizing a range of proteins. Seems to fulfill an ATP-independent, HSP70-like function in archaeal de novo protein folding. The polypeptide is Prefoldin subunit alpha (pfdA) (Archaeoglobus fulgidus (strain ATCC 49558 / DSM 4304 / JCM 9628 / NBRC 100126 / VC-16)).